The sequence spans 156 residues: MTRRQRRLGILLAALVCAGAATALTLNAFRSNLVFFFSPTQIAAKEAPVAQVFRLGGLVERGSIQRERDGMTIRFIVTDTARGVPVVYHGLLPDLFREGKGVVARGRLGEDGVFVANEVLAKHDENYMPPEAADALRRAVQVNEQMAKESARSASR.

Over 1-7 (MTRRQRR) the chain is Cytoplasmic. The helical; Signal-anchor for type II membrane protein transmembrane segment at 8 to 28 (LGILLAALVCAGAATALTLNA) threads the bilayer. At 29–156 (FRSNLVFFFS…AKESARSASR (128 aa)) the chain is on the periplasmic side. Residues histidine 123 and tyrosine 127 each coordinate heme.

It belongs to the CcmE/CycJ family.

The protein localises to the cell inner membrane. In terms of biological role, heme chaperone required for the biogenesis of c-type cytochromes. Transiently binds heme delivered by CcmC and transfers the heme to apo-cytochromes in a process facilitated by CcmF and CcmH. The chain is Cytochrome c-type biogenesis protein CcmE from Ralstonia pickettii (strain 12J).